A 177-amino-acid polypeptide reads, in one-letter code: Endoribonuclease YbeY (177 aa).

Residues histidine 114, histidine 118, and histidine 124 each coordinate Zn(2+). Residues 154-177 (SYPEAIPTNPAPRRQASSSAGHIE) are disordered. Positions 168–177 (QASSSAGHIE) are enriched in polar residues.

The protein belongs to the endoribonuclease YbeY family. Zn(2+) serves as cofactor.

The protein resides in the cytoplasm. In terms of biological role, single strand-specific metallo-endoribonuclease involved in late-stage 70S ribosome quality control and in maturation of the 3' terminus of the 16S rRNA. In Cellvibrio japonicus (strain Ueda107) (Pseudomonas fluorescens subsp. cellulosa), this protein is Endoribonuclease YbeY.